The following is a 265-amino-acid chain: Hydroxyethylthiazole kinase 2 (265 aa).

Methionine 39 is a substrate binding site. Positions 115 and 168 each coordinate ATP. Glycine 195 lines the substrate pocket.

This sequence belongs to the Thz kinase family. Requires Mg(2+) as cofactor.

It catalyses the reaction 5-(2-hydroxyethyl)-4-methylthiazole + ATP = 4-methyl-5-(2-phosphooxyethyl)-thiazole + ADP + H(+). It participates in cofactor biosynthesis; thiamine diphosphate biosynthesis; 4-methyl-5-(2-phosphoethyl)-thiazole from 5-(2-hydroxyethyl)-4-methylthiazole: step 1/1. Functionally, catalyzes the phosphorylation of the hydroxyl group of 4-methyl-5-beta-hydroxyethylthiazole (THZ). The sequence is that of Hydroxyethylthiazole kinase 2 from Clostridium botulinum (strain Okra / Type B1).